Here is a 497-residue protein sequence, read N- to C-terminus: Glycerol kinase (497 aa).

T13 serves as a coordination point for ADP. T13, T14, and S15 together coordinate ATP. Residue T13 participates in sn-glycerol 3-phosphate binding. ADP is bound at residue R17. Sn-glycerol 3-phosphate is bound by residues R83, E84, and Y135. Residues R83, E84, and Y135 each contribute to the glycerol site. H231 is subject to Phosphohistidine; by HPr. A sn-glycerol 3-phosphate-binding site is contributed by D245. Positions 245 and 246 each coordinate glycerol. ADP contacts are provided by T267 and G310. 4 residues coordinate ATP: T267, G310, Q314, and G411. Residues G411 and N415 each contribute to the ADP site.

The protein belongs to the FGGY kinase family. Homotetramer and homodimer (in equilibrium). In terms of processing, the phosphoenolpyruvate-dependent sugar phosphotransferase system (PTS), including enzyme I, and histidine-containing protein (HPr) are required for the phosphorylation, which leads to the activation of the enzyme.

The enzyme catalyses glycerol + ATP = sn-glycerol 3-phosphate + ADP + H(+). It functions in the pathway polyol metabolism; glycerol degradation via glycerol kinase pathway; sn-glycerol 3-phosphate from glycerol: step 1/1. Its activity is regulated as follows. Activated by phosphorylation and inhibited by fructose 1,6-bisphosphate (FBP). In terms of biological role, key enzyme in the regulation of glycerol uptake and metabolism. Catalyzes the phosphorylation of glycerol to yield sn-glycerol 3-phosphate. The chain is Glycerol kinase from Listeria monocytogenes serovar 1/2a (strain ATCC BAA-679 / EGD-e).